Reading from the N-terminus, the 630-residue chain is Auxin efflux carrier component 2 (630 aa).

Over 1 to 6 the chain is Extracellular; that stretch reads MITGRD. A helical transmembrane segment spans residues 7–27; sequence IYDVLAAIVPLYVAMFLAYGS. The Cytoplasmic portion of the chain corresponds to 28-38; that stretch reads VRWWGIFTPDQ. The helical transmembrane segment at 39–59 threads the bilayer; the sequence is CSGINRFVAVFAVPLLSFHFI. Residue Val51 participates in (indol-3-yl)acetate binding. Residues 60-70 lie on the Extracellular side of the membrane; it reads STNDPYSMNYR. The helical transmembrane segment at 71–91 threads the bilayer; the sequence is FLAADSLQKLVILAALAVWHN. Over 92-108 the chain is Cytoplasmic; the sequence is LLSRYRRNGGAAASLDW. The chain crosses the membrane as a helical span at residues 109 to 129; that stretch reads TITLFSLSTLPNTLVMGIPLL. Residues Asn120 and Leu122 each coordinate (indol-3-yl)acetate. The Extracellular segment spans residues 130 to 139; sequence RAMYGDFSGS. The chain crosses the membrane as a helical span at residues 140-160; sequence LMVQIVVLQSVIWYTLMLFLF. Tyr153 serves as a coordination point for (indol-3-yl)acetate. Residues 161–490 are Cytoplasmic-facing; it reads EYRGAKALIS…LIRNPNTYSS (330 aa). The tract at residues 317–350 is disordered; it reads ASGKAADPPSYPAPNPGMMPAPRKKELGGSNSNS. The span at 325 to 335 shows a compositional bias: pro residues; the sequence is PSYPAPNPGMM. Residues 491–511 form a helical membrane-spanning segment; it reads LIGLVWSLVSFRWNIQMPSII. Residues 512-514 are Extracellular-facing; that stretch reads KGS. Residues 515-535 traverse the membrane as a helical segment; the sequence is ISILSDAGLGMAMFSLGLFMA. Residues 536–549 are Cytoplasmic-facing; it reads LQPKIISCGKTVAT. Residues 550–570 traverse the membrane as a helical segment; the sequence is FAMAVRFLTGPAVIAATSIAI. The Extracellular segment spans residues 571–574; it reads GLRG. A helical transmembrane segment spans residues 575 to 595; sequence VLLHVAIVQAALPQGIVPFVF. Residues Ile590 and Val591 each contribute to the (indol-3-yl)acetate site. The Cytoplasmic portion of the chain corresponds to 596–609; sequence AKEYNCHPQILSTA. Residues 610 to 630 form a helical membrane-spanning segment; it reads VIFGMLIALPITILYYVLLGI.

It belongs to the auxin efflux carrier (TC 2.A.69.1) family. Homodimer. As to expression, expressed in roots, leaves, shoot apex and panicles. Expressed in roots, stem bases and young panicles.

The protein resides in the membrane. In terms of biological role, acts as a component of the auxin efflux carrier. Involved in the basipetal polar auxin transport which contributes to the spreading growth of the tillers. The chain is Auxin efflux carrier component 2 from Oryza sativa subsp. japonica (Rice).